The chain runs to 227 residues: Lectin (227 aa).

The first 28 residues, 1–28 (MTMTSTTTKAMAMAAAVLAAAAVAATNA), serve as a signal peptide directing secretion. Position 29 is a pyrrolidone carboxylic acid (Gln-29). 4 Chitin-binding type-1 domains span residues 29 to 70 (QTCG…ACCS), 71 to 113 (SQRC…PCRA), 114 to 156 (DIKC…ACCP), and 157 to 199 (EKRC…GCYK). 16 cysteine pairs are disulfide-bonded: Cys-31/Cys-46, Cys-40/Cys-52, Cys-45/Cys-59, Cys-63/Cys-68, Cys-74/Cys-89, Cys-83/Cys-95, Cys-88/Cys-102, Cys-106/Cys-111, Cys-117/Cys-132, Cys-126/Cys-138, Cys-131/Cys-145, Cys-149/Cys-154, Cys-160/Cys-175, Cys-169/Cys-181, Cys-174/Cys-188, and Cys-192/Cys-197. 38 to 40 (MIC) is a substrate binding site. 90 to 101 (SQYGYCGFGSEY) is a binding site for substrate. 142–143 (SE) contacts substrate. Residues 202-227 (DGMAAILANNQSVSFEGIIESVAELV) constitute a propeptide that is removed on maturation. A glycan (N-linked (GlcNAc...) asparagine) is linked at Asn-211.

In terms of biological role, N-acetyl-D-glucosamine binding lectin. This is Lectin from Oryza sativa subsp. indica (Rice).